Here is a 209-residue protein sequence, read N- to C-terminus: Probable glutathione peroxidase 8-B (209 aa).

A helical membrane pass occupies residues 18-40 (VFLVFFSMVLCTGILCVLQLKFL). The active site involves Cys79.

This sequence belongs to the glutathione peroxidase family.

The protein localises to the membrane. The enzyme catalyses 2 glutathione + H2O2 = glutathione disulfide + 2 H2O. The sequence is that of Probable glutathione peroxidase 8-B (gpx8-b) from Xenopus laevis (African clawed frog).